A 379-amino-acid polypeptide reads, in one-letter code: Carbamoyl phosphate synthase small chain (379 aa).

The tract at residues 1–183 (MTSQDRSEAV…EAYVVEPDGE (183 aa)) is CPSase. L-glutamine-binding residues include S51, G235, and G237. Residues 185–379 (LYTVVAYDMG…FVELIQANKK (195 aa)) form the Glutamine amidotransferase type-1 domain. C263 serves as the catalytic Nucleophile. L-glutamine is bound by residues F264, Q267, N305, G307, and F308. Active-site residues include H353 and E355.

Belongs to the CarA family. In terms of assembly, composed of two chains; the small (or glutamine) chain promotes the hydrolysis of glutamine to ammonia, which is used by the large (or ammonia) chain to synthesize carbamoyl phosphate. Tetramer of heterodimers (alpha,beta)4.

It carries out the reaction hydrogencarbonate + L-glutamine + 2 ATP + H2O = carbamoyl phosphate + L-glutamate + 2 ADP + phosphate + 2 H(+). The enzyme catalyses L-glutamine + H2O = L-glutamate + NH4(+). It functions in the pathway amino-acid biosynthesis; L-arginine biosynthesis; carbamoyl phosphate from bicarbonate: step 1/1. It participates in pyrimidine metabolism; UMP biosynthesis via de novo pathway; (S)-dihydroorotate from bicarbonate: step 1/3. Functionally, small subunit of the glutamine-dependent carbamoyl phosphate synthetase (CPSase). CPSase catalyzes the formation of carbamoyl phosphate from the ammonia moiety of glutamine, carbonate, and phosphate donated by ATP, constituting the first step of 2 biosynthetic pathways, one leading to arginine and/or urea and the other to pyrimidine nucleotides. The small subunit (glutamine amidotransferase) binds and cleaves glutamine to supply the large subunit with the substrate ammonia. The polypeptide is Carbamoyl phosphate synthase small chain (Corynebacterium diphtheriae (strain ATCC 700971 / NCTC 13129 / Biotype gravis)).